The following is a 133-amino-acid chain: Large ribosomal subunit protein uL22 (133 aa).

It belongs to the universal ribosomal protein uL22 family. Part of the 50S ribosomal subunit.

In terms of biological role, this protein binds specifically to 23S rRNA; its binding is stimulated by other ribosomal proteins, e.g. L4, L17, and L20. It is important during the early stages of 50S assembly. It makes multiple contacts with different domains of the 23S rRNA in the assembled 50S subunit and ribosome. Functionally, the globular domain of the protein is located near the polypeptide exit tunnel on the outside of the subunit, while an extended beta-hairpin is found that lines the wall of the exit tunnel in the center of the 70S ribosome. This is Large ribosomal subunit protein uL22 from Granulibacter bethesdensis (strain ATCC BAA-1260 / CGDNIH1).